A 363-amino-acid polypeptide reads, in one-letter code: S-adenosylmethionine:tRNA ribosyltransferase-isomerase (363 aa).

It belongs to the QueA family. In terms of assembly, monomer.

Its subcellular location is the cytoplasm. It catalyses the reaction 7-aminomethyl-7-carbaguanosine(34) in tRNA + S-adenosyl-L-methionine = epoxyqueuosine(34) in tRNA + adenine + L-methionine + 2 H(+). It participates in tRNA modification; tRNA-queuosine biosynthesis. In terms of biological role, transfers and isomerizes the ribose moiety from AdoMet to the 7-aminomethyl group of 7-deazaguanine (preQ1-tRNA) to give epoxyqueuosine (oQ-tRNA). The sequence is that of S-adenosylmethionine:tRNA ribosyltransferase-isomerase from Haemophilus influenzae (strain PittGG).